A 349-amino-acid polypeptide reads, in one-letter code: NADH-ubiquinone oxidoreductase chain 2 (349 aa).

The next 9 membrane-spanning stretches (helical) occupy residues 3–23 (PYVL…TFAS), 66–86 (AAAM…EWEI), 98–118 (VMLA…LPEV), 139–159 (FALM…TIGL), 178–198 (ILAY…QFAP), 199–219 (SLTL…FLTL), 240–260 (LAAL…LSGF), 274–294 (GLPL…YFYL), and 319–339 (FTMI…LLPL).

The protein belongs to the complex I subunit 2 family.

It is found in the mitochondrion inner membrane. The catalysed reaction is a ubiquinone + NADH + 5 H(+)(in) = a ubiquinol + NAD(+) + 4 H(+)(out). Functionally, core subunit of the mitochondrial membrane respiratory chain NADH dehydrogenase (Complex I) that is believed to belong to the minimal assembly required for catalysis. Complex I functions in the transfer of electrons from NADH to the respiratory chain. The immediate electron acceptor for the enzyme is believed to be ubiquinone. The sequence is that of NADH-ubiquinone oxidoreductase chain 2 (MT-ND2) from Oncorhynchus mykiss (Rainbow trout).